A 394-amino-acid polypeptide reads, in one-letter code: 5-azacytidine-induced protein 2 (394 aa).

Residues methionine 1–aspartate 197 are homodimerization. 2 coiled-coil regions span residues alanine 40–arginine 76 and aspartate 102–threonine 196. Positions serine 216–cysteine 257 are interaction with TBK1 and IKBKE. Phosphoserine occurs at positions 318 and 355. The disordered stretch occupies residues serine 355 to proline 379.

In terms of assembly, homodimer. Interacts with IKBKE, TBK1 and TICAM1. Interacts with TAX1BP1. Interacts with CALCOCO2. In terms of processing, ubiquitinated via 'Lys-48'-linked polyubiquitination by TRIM38, leading to its degradation.

It localises to the cytoplasm. In terms of biological role, adapter protein which binds TBK1 and IKBKE playing a role in antiviral innate immunity. Activates serine/threonine-protein kinase TBK1 and facilitates its oligomerization. Enhances the phosphorylation of NF-kappa-B p65 subunit RELA by TBK1. Promotes TBK1-induced as well as TNF-alpha or PMA-induced activation of NF-kappa-B. Participates in IFNB promoter activation via TICAM1. The protein is 5-azacytidine-induced protein 2 (AZI2) of Macaca fascicularis (Crab-eating macaque).